The primary structure comprises 155 residues: Small ribosomal subunit protein uS7cz/uS7cy (155 aa).

This sequence belongs to the universal ribosomal protein uS7 family. As to quaternary structure, part of the 30S ribosomal subunit.

It is found in the plastid. The protein resides in the chloroplast. One of the primary rRNA binding proteins, it binds directly to 16S rRNA where it nucleates assembly of the head domain of the 30S subunit. This is Small ribosomal subunit protein uS7cz/uS7cy (rps7-A) from Lotus japonicus (Lotus corniculatus var. japonicus).